The sequence spans 469 residues: Endoplasmic reticulum oxidoreductin-1 (469 aa).

An N-terminal signal peptide occupies residues 1–36 (MGKGAIKEEESEKKRKTWRWPLATLVVVFLAVAVSS). Cystine bridges form between cysteine 52-cysteine 71, cysteine 54-cysteine 69, cysteine 108-cysteine 372, cysteine 117-cysteine 122, cysteine 222-cysteine 231, and cysteine 375-cysteine 378. 3 residues coordinate FAD: arginine 201, threonine 203, and tryptophan 214. Positions 242, 245, 275, and 282 each coordinate FAD. Asparagine 365 carries N-linked (GlcNAc...) asparagine glycosylation.

This sequence belongs to the EROs family. May function both as a monomer and a homodimer. Requires FAD as cofactor. N-glycosylated.

It localises to the endoplasmic reticulum membrane. Its function is as follows. Essential oxidoreductase that oxidizes proteins in the endoplasmic reticulum to produce disulfide bonds. Acts by oxidizing directly PDI isomerase through a direct disulfide exchange. Does not act as a direct oxidant of folding substrate, but relies on PDI to transfer oxidizing equivalent. Does not oxidize all PDI related proteins, suggesting that it can discriminate between PDI and related proteins. Its reoxidation probably involves electron transfer to molecular oxygen via FAD. Acts independently of glutathione. May be responsible for a significant proportion of reactive oxygen species (ROS) in the cell, thereby being a source of oxidative stress. The sequence is that of Endoplasmic reticulum oxidoreductin-1 (AERO1) from Arabidopsis thaliana (Mouse-ear cress).